Reading from the N-terminus, the 173-residue chain is Co-chaperone protein HscB (173 aa).

The J domain occupies 2-74; the sequence is DYFTLFGLPA…LKRAEYMLSL (73 aa).

The protein belongs to the HscB family. In terms of assembly, interacts with HscA and stimulates its ATPase activity. Interacts with IscU.

Its function is as follows. Co-chaperone involved in the maturation of iron-sulfur cluster-containing proteins. Seems to help targeting proteins to be folded toward HscA. This is Co-chaperone protein HscB from Photorhabdus laumondii subsp. laumondii (strain DSM 15139 / CIP 105565 / TT01) (Photorhabdus luminescens subsp. laumondii).